Here is a 158-residue protein sequence, read N- to C-terminus: NAD(P)H-quinone oxidoreductase subunit J, chloroplastic (158 aa).

This sequence belongs to the complex I 30 kDa subunit family. In terms of assembly, NDH is composed of at least 16 different subunits, 5 of which are encoded in the nucleus.

The protein resides in the plastid. Its subcellular location is the chloroplast thylakoid membrane. The enzyme catalyses a plastoquinone + NADH + (n+1) H(+)(in) = a plastoquinol + NAD(+) + n H(+)(out). It carries out the reaction a plastoquinone + NADPH + (n+1) H(+)(in) = a plastoquinol + NADP(+) + n H(+)(out). Functionally, NDH shuttles electrons from NAD(P)H:plastoquinone, via FMN and iron-sulfur (Fe-S) centers, to quinones in the photosynthetic chain and possibly in a chloroplast respiratory chain. The immediate electron acceptor for the enzyme in this species is believed to be plastoquinone. Couples the redox reaction to proton translocation, and thus conserves the redox energy in a proton gradient. The sequence is that of NAD(P)H-quinone oxidoreductase subunit J, chloroplastic from Morus indica (Mulberry).